Here is a 454-residue protein sequence, read N- to C-terminus: Putative tyrosine kinase 36 (454 aa).

Residues 80–88 (LGSGSFGKV) and Lys-98 each bind ATP. Asp-192 functions as the Proton acceptor in the catalytic mechanism.

This sequence belongs to the protein kinase superfamily. Tyr protein kinase family.

The catalysed reaction is L-tyrosyl-[protein] + ATP = O-phospho-L-tyrosyl-[protein] + ADP + H(+). This chain is Putative tyrosine kinase 36 (36), found in Alcelaphine herpesvirus 1 (strain C500) (AlHV-1).